The primary structure comprises 349 residues: Phosphoribosylformylglycinamidine cyclo-ligase (349 aa).

This sequence belongs to the AIR synthase family.

It is found in the cytoplasm. The enzyme catalyses 2-formamido-N(1)-(5-O-phospho-beta-D-ribosyl)acetamidine + ATP = 5-amino-1-(5-phospho-beta-D-ribosyl)imidazole + ADP + phosphate + H(+). It participates in purine metabolism; IMP biosynthesis via de novo pathway; 5-amino-1-(5-phospho-D-ribosyl)imidazole from N(2)-formyl-N(1)-(5-phospho-D-ribosyl)glycinamide: step 2/2. This is Phosphoribosylformylglycinamidine cyclo-ligase from Bordetella pertussis (strain Tohama I / ATCC BAA-589 / NCTC 13251).